A 247-amino-acid chain; its full sequence is MRPDLIALQERLQHVFSDPGLLERATTHRSFSAEHNERLEFLGDSVLNLAVSSLLYQRLSALPEGELSRVRANLVRQESLYQLALRLPLAQALRLGESLSGNRQRRSRRRCADELQPDEAGSGGLQHPSILADALEALIGAVYLDAGYASAQALVQRLFQDVEISPRMQAAARDAKTALQEWLASRKMKPPQYQVVARVGAAHCPTFEVACGIPALGLTERGSAGSRQAGEQAAAAAMLATLKARNL.

The region spanning 5 to 147 (LIALQERLQH…LIGAVYLDAG (143 aa)) is the RNase III domain. Glu-40 is a Mg(2+) binding site. The active site involves Asp-44. Positions 104–124 (QRRSRRRCADELQPDEAGSGG) are disordered. Positions 133 and 136 each coordinate Mg(2+). Residue Glu-136 is part of the active site. The DRBM domain occupies 174 to 244 (DAKTALQEWL…AAAMLATLKA (71 aa)).

Belongs to the ribonuclease III family. As to quaternary structure, homodimer. Mg(2+) is required as a cofactor.

It is found in the cytoplasm. The catalysed reaction is Endonucleolytic cleavage to 5'-phosphomonoester.. Its function is as follows. Digests double-stranded RNA. Involved in the processing of primary rRNA transcript to yield the immediate precursors to the large and small rRNAs (23S and 16S). Processes some mRNAs, and tRNAs when they are encoded in the rRNA operon. Processes pre-crRNA and tracrRNA of type II CRISPR loci if present in the organism. This Verminephrobacter eiseniae (strain EF01-2) protein is Ribonuclease 3.